Here is a 363-residue protein sequence, read N- to C-terminus: tRNA N6-adenosine threonylcarbamoyltransferase (363 aa).

2 residues coordinate Fe cation: H127 and H131. Residues 150–154 (LISGG), D183, G196, and N290 contribute to the substrate site. D318 lines the Fe cation pocket.

The protein belongs to the KAE1 / TsaD family. It depends on Fe(2+) as a cofactor.

Its subcellular location is the cytoplasm. It carries out the reaction L-threonylcarbamoyladenylate + adenosine(37) in tRNA = N(6)-L-threonylcarbamoyladenosine(37) in tRNA + AMP + H(+). Required for the formation of a threonylcarbamoyl group on adenosine at position 37 (t(6)A37) in tRNAs that read codons beginning with adenine. Is involved in the transfer of the threonylcarbamoyl moiety of threonylcarbamoyl-AMP (TC-AMP) to the N6 group of A37, together with TsaE and TsaB. TsaD likely plays a direct catalytic role in this reaction. In Zymomonas mobilis subsp. mobilis (strain ATCC 31821 / ZM4 / CP4), this protein is tRNA N6-adenosine threonylcarbamoyltransferase.